Reading from the N-terminus, the 169-residue chain is Peptide methionine sulfoxide reductase MsrA (169 aa).

Residue cysteine 10 is part of the active site.

This sequence belongs to the MsrA Met sulfoxide reductase family.

The catalysed reaction is L-methionyl-[protein] + [thioredoxin]-disulfide + H2O = L-methionyl-(S)-S-oxide-[protein] + [thioredoxin]-dithiol. The enzyme catalyses [thioredoxin]-disulfide + L-methionine + H2O = L-methionine (S)-S-oxide + [thioredoxin]-dithiol. Functionally, has an important function as a repair enzyme for proteins that have been inactivated by oxidation. Catalyzes the reversible oxidation-reduction of methionine sulfoxide in proteins to methionine. In Streptococcus equi subsp. zooepidemicus (strain MGCS10565), this protein is Peptide methionine sulfoxide reductase MsrA.